We begin with the raw amino-acid sequence, 491 residues long: Cytochrome P450 monooxygenase olcB (491 aa).

Residues 5-27 (LLLSLSVCLLYVFITAFWNLYIH) form a helical membrane-spanning segment. Cys-435 contacts heme.

The protein belongs to the cytochrome P450 family. The cofactor is heme.

It is found in the membrane. The protein operates within secondary metabolite biosynthesis; terpenoid biosynthesis. Functionally, cytochrome P450 monooxygenase; part of the gene cluster that mediates the biosynthesis of 15-deoxyoxalicine B. The first step of the pathway is the synthesis of nicotinyl-CoA from nicotinic acid by the nicotinic acid-CoA ligase olcI. Nicotinyl-CoA is then a substrate of polyketide synthase olcA to produce 4-hydroxy-6-(3-pyridinyl)-2H-pyran-2-one (HPPO) which is further prenylated by the polyprenyl transferase olcH to yield geranylgeranyl-HPPO. Geranylgeranyl pyrophosphate is provided by the cluster-specific geranylgeranyl pyrophosphate synthase olcC. The FAD-dependent monooxygenase olcE catalyzes the epoxidation of geranylgeranyl-HPPO and the terpene cyclase olcD catalyzes the cyclization of the terpenoid component, resulting in the formation of the tricyclic terpene moiety seen in predecaturin E. The cytochrome P450 monooxygenase then catalyzes the allylic oxidation of predecaturin E, which is followed by spirocylization with concomitant loss of one molecule of water to form decaturin E. Decaturin E is the substrate of the cytochrome P450 monooxygenase olcJ which hydroxylates it at the C-29 position to form decaturin F. The short-chain dehydrogenase/reductase olcF may catalyze the oxidation of decaturin F to generate the 29-hydroxyl-27-one intermediate, and subsequent hemiacetal formation probably leads to the formation of decaturin C. The dioxygenase olcK may be a peroxisomal enzyme that catalyzes the hydroxylation of decaturin C into decaturin A once decaturin C is shuttled into the peroxisome by the MFS transporter olcL. Finally the cytochrome P450 monooxygenase olcB catalyzes the oxidative rearrangement to yield 15-deoxyoxalicine B. In the absence of olcJ, decaturin E may be shunted to a pathway in which it is oxidized to a ketone, possibly by olcF, to form decaturin D, which undergoes further allylic oxidation to yield decaturin G. Moreover, in the absence of oclK or oclL, oclB can convert decaturin C into 15-deoxyoxalicine A. This Penicillium canescens protein is Cytochrome P450 monooxygenase olcB.